The primary structure comprises 136 residues: Group 1 truncated hemoglobin GlbN (136 aa).

Position 81 (H81) interacts with heme.

This sequence belongs to the truncated hemoglobin family. Group I subfamily. As to quaternary structure, homodimer. Heme serves as cofactor.

Functionally, binds oxygen cooperatively with very high affinity (P(50) = 0.013 mmHg at 20 degrees Celsius) because of a fast combination (25 microM(-1)sec(-1)) and a slow dissociation (0.2 sec(-1)) rate. The polypeptide is Group 1 truncated hemoglobin GlbN (glbN) (Mycobacterium bovis (strain ATCC BAA-935 / AF2122/97)).